The sequence spans 323 residues: tRNA dimethylallyltransferase (323 aa).

13–20 (GPTASGKT) is a binding site for ATP. 15 to 20 (TASGKT) is a substrate binding site. Interaction with substrate tRNA regions lie at residues 42–45 (DSAL), 166–170 (QRIQR), 251–256 (RCVGYR), and 284–291 (KRQITWLR).

The protein belongs to the IPP transferase family. Monomer. Mg(2+) is required as a cofactor.

It carries out the reaction adenosine(37) in tRNA + dimethylallyl diphosphate = N(6)-dimethylallyladenosine(37) in tRNA + diphosphate. Its function is as follows. Catalyzes the transfer of a dimethylallyl group onto the adenine at position 37 in tRNAs that read codons beginning with uridine, leading to the formation of N6-(dimethylallyl)adenosine (i(6)A). In Acidovorax ebreus (strain TPSY) (Diaphorobacter sp. (strain TPSY)), this protein is tRNA dimethylallyltransferase.